The sequence spans 510 residues: Probable cytochrome P450 312a1 (510 aa).

Cys455 contributes to the heme binding site.

Belongs to the cytochrome P450 family. It depends on heme as a cofactor.

It localises to the endoplasmic reticulum membrane. Its subcellular location is the microsome membrane. Functionally, may be involved in the metabolism of insect hormones and in the breakdown of synthetic insecticides. This chain is Probable cytochrome P450 312a1 (Cyp312a1), found in Drosophila melanogaster (Fruit fly).